An 887-amino-acid polypeptide reads, in one-letter code: Probable LRR receptor-like serine/threonine-protein kinase At5g59680 (887 aa).

Residues 1 to 23 form the signal peptide; that stretch reads MERSLELLLLLIRTLAIIHISQA. At 25 to 510 the chain is on the extracellular side; it reads SQQGFISLDC…TKSGKSFPVT (486 aa). 12 N-linked (GlcNAc...) asparagine glycosylation sites follow: asparagine 143, asparagine 230, asparagine 256, asparagine 289, asparagine 338, asparagine 363, asparagine 400, asparagine 416, asparagine 432, asparagine 445, asparagine 464, and asparagine 471. LRR repeat units follow at residues 411 to 434, 435 to 457, and 459 to 481; these read RITT…QNLT, TLEK…LSNM, and SLLV…LQRK. The helical transmembrane segment at 511–531 threads the bilayer; that stretch reads IVASVGSAAILIVVLVLVLFL. The Cytoplasmic segment spans residues 532 to 887; the sequence is RKKKPSAVEV…FDAEMIPRAR (356 aa). Threonine 571 bears the Phosphothreonine mark. Residues 580-853 form the Protein kinase domain; sequence NNFGRVVGEG…HVVIELKECL (274 aa). Residues 586–594 and lysine 608 each bind ATP; that span reads VGEGGFGVV. Tyrosine 653 is modified (phosphotyrosine). The active-site Proton acceptor is aspartate 705. The residue at position 739 (serine 739) is a Phosphoserine. Threonine 740 and threonine 745 each carry phosphothreonine. The residue at position 753 (tyrosine 753) is a Phosphotyrosine.

The protein belongs to the protein kinase superfamily. Ser/Thr protein kinase family.

Its subcellular location is the membrane. The catalysed reaction is L-seryl-[protein] + ATP = O-phospho-L-seryl-[protein] + ADP + H(+). It carries out the reaction L-threonyl-[protein] + ATP = O-phospho-L-threonyl-[protein] + ADP + H(+). In Arabidopsis thaliana (Mouse-ear cress), this protein is Probable LRR receptor-like serine/threonine-protein kinase At5g59680.